The primary structure comprises 417 residues: NADH-quinone oxidoreductase subunit D (417 aa).

Belongs to the complex I 49 kDa subunit family. As to quaternary structure, NDH-1 is composed of 14 different subunits. Subunits NuoB, C, D, E, F, and G constitute the peripheral sector of the complex.

Its subcellular location is the cell inner membrane. It carries out the reaction a quinone + NADH + 5 H(+)(in) = a quinol + NAD(+) + 4 H(+)(out). NDH-1 shuttles electrons from NADH, via FMN and iron-sulfur (Fe-S) centers, to quinones in the respiratory chain. The immediate electron acceptor for the enzyme in this species is believed to be ubiquinone. Couples the redox reaction to proton translocation (for every two electrons transferred, four hydrogen ions are translocated across the cytoplasmic membrane), and thus conserves the redox energy in a proton gradient. This chain is NADH-quinone oxidoreductase subunit D, found in Paraburkholderia phytofirmans (strain DSM 17436 / LMG 22146 / PsJN) (Burkholderia phytofirmans).